We begin with the raw amino-acid sequence, 398 residues long: Succinate--CoA ligase [ADP-forming] subunit beta (398 aa).

An ATP-grasp domain is found at 9–253 (KEILASYGVR…IREENPIEVE (245 aa)). ATP-binding positions include lysine 50, 57 to 59 (GRG), valine 106, and glutamate 116. Residues asparagine 208 and aspartate 222 each coordinate Mg(2+). Substrate contacts are provided by residues asparagine 273 and 330–332 (GIV).

The protein belongs to the succinate/malate CoA ligase beta subunit family. In terms of assembly, heterotetramer of two alpha and two beta subunits. Mg(2+) is required as a cofactor.

The enzyme catalyses succinate + ATP + CoA = succinyl-CoA + ADP + phosphate. It catalyses the reaction GTP + succinate + CoA = succinyl-CoA + GDP + phosphate. The protein operates within carbohydrate metabolism; tricarboxylic acid cycle; succinate from succinyl-CoA (ligase route): step 1/1. Functionally, succinyl-CoA synthetase functions in the citric acid cycle (TCA), coupling the hydrolysis of succinyl-CoA to the synthesis of either ATP or GTP and thus represents the only step of substrate-level phosphorylation in the TCA. The beta subunit provides nucleotide specificity of the enzyme and binds the substrate succinate, while the binding sites for coenzyme A and phosphate are found in the alpha subunit. This Flavobacterium psychrophilum (strain ATCC 49511 / DSM 21280 / CIP 103535 / JIP02/86) protein is Succinate--CoA ligase [ADP-forming] subunit beta.